Reading from the N-terminus, the 555-residue chain is Putative polyketide hydroxylase (555 aa).

Residues 16–45 (PVLV…LVER) and 303–313 (YRAGRVFLAGD) contribute to the FAD site. The interval 366-395 (ATTARAAARSAEHSHPGFAPPPGTSGGPQG) is disordered.

It belongs to the PheA/TfdB FAD monooxygenase family. FAD is required as a cofactor.

Involved in developmentally regulated synthesis of a compound biosynthetically related to polyketide antibiotics which is essential for spore color in Streptomyces halstedii. This chain is Putative polyketide hydroxylase (schC), found in Streptomyces halstedii.